A 386-amino-acid chain; its full sequence is MDKASITEGKPIRCKAAILRKAGEPLVIEEIQVDPPQAYEVRIKILCTSLCHTDVTFWKLDSGPLARFPRILGHEAVGVVESIGEKVDGFKQGDVVLPVFHPQCEECKECISPKSNWCTKYTNDYLSNTRRYGMTSRFKDSRGEDIHHFIFVSSFTEYTVVDIAHLVKISPEIPVDIAALLSCSVATGLGAAWKVADVEEGSTVVIFGLGAVGLAVAEGVRLRGAAKIIGVDLNPAKFEIGKRFGITDFVNPALCGEKTISEVIREMTDVGADYSFECIGLASLMEEAFKSTRPGSGKTIVLGMEQKALPISLGSYDLLRGRTVCGTLFGGLKPKLDIPILVDRYLKKELNLEDLITHELSFEEINKAFHLLAEGNSIRCIIWMDK.

C51, T53, H74, C104, C107, C110, C118, and C183 together coordinate Zn(2+). Residues T53 and H74 each coordinate an alcohol. T53 is an NAD(+) binding site. NAD(+) contacts are provided by residues G208 to G213, D232, K237, L302 to M304, F329, and R379.

It belongs to the zinc-containing alcohol dehydrogenase family. Class-III subfamily. As to quaternary structure, homodimer. Requires Zn(2+) as cofactor.

Its subcellular location is the cytoplasm. The enzyme catalyses a primary alcohol + NAD(+) = an aldehyde + NADH + H(+). It catalyses the reaction a secondary alcohol + NAD(+) = a ketone + NADH + H(+). In Arabidopsis thaliana (Mouse-ear cress), this protein is Alcohol dehydrogenase-like 2.